The chain runs to 151 residues: Deoxyuridine 5'-triphosphate nucleotidohydrolase (151 aa).

Substrate contacts are provided by residues 70–72 (RSG), Asn83, 87–89 (LID), and Met97.

Belongs to the dUTPase family. Requires Mg(2+) as cofactor.

It catalyses the reaction dUTP + H2O = dUMP + diphosphate + H(+). It participates in pyrimidine metabolism; dUMP biosynthesis; dUMP from dCTP (dUTP route): step 2/2. This enzyme is involved in nucleotide metabolism: it produces dUMP, the immediate precursor of thymidine nucleotides and it decreases the intracellular concentration of dUTP so that uracil cannot be incorporated into DNA. This is Deoxyuridine 5'-triphosphate nucleotidohydrolase from Sodalis glossinidius (strain morsitans).